Here is a 295-residue protein sequence, read N- to C-terminus: Protoheme IX farnesyltransferase 2 (295 aa).

9 helical membrane passes run 9–29 (ITKPGIIFGNVLSVAGGFFLA), 36–56 (LAIFLAAMIGTSLVVASGCVF), 85–105 (VALVYASILGVAGVALLYYVA), 108–128 (LAALFAVIGFVIYVGFYSLYL), 135–155 (GTLVGSLSGAMPPVIGYVAVS), 163–183 (LTLLVMFSLWQMPHSYAIAIF), 209–229 (ILLYILAFLVATLMLTFSGYA), 230–250 (GMSYLAVAAAMGMYWLYMAWT), and 263–283 (KLFVFSIFTITALSVMMSVDF).

The protein belongs to the UbiA prenyltransferase family. Protoheme IX farnesyltransferase subfamily.

It localises to the cell inner membrane. The enzyme catalyses heme b + (2E,6E)-farnesyl diphosphate + H2O = Fe(II)-heme o + diphosphate. It functions in the pathway porphyrin-containing compound metabolism; heme O biosynthesis; heme O from protoheme: step 1/1. In terms of biological role, converts heme B (protoheme IX) to heme O by substitution of the vinyl group on carbon 2 of heme B porphyrin ring with a hydroxyethyl farnesyl side group. This chain is Protoheme IX farnesyltransferase 2, found in Pseudomonas fluorescens (strain ATCC BAA-477 / NRRL B-23932 / Pf-5).